The primary structure comprises 353 residues: Phosphate acyltransferase (353 aa).

The protein belongs to the PlsX family. In terms of assembly, homodimer. Probably interacts with PlsY.

It is found in the cytoplasm. It carries out the reaction a fatty acyl-[ACP] + phosphate = an acyl phosphate + holo-[ACP]. It functions in the pathway lipid metabolism; phospholipid metabolism. In terms of biological role, catalyzes the reversible formation of acyl-phosphate (acyl-PO(4)) from acyl-[acyl-carrier-protein] (acyl-ACP). This enzyme utilizes acyl-ACP as fatty acyl donor, but not acyl-CoA. This is Phosphate acyltransferase from Rhodopseudomonas palustris (strain BisB5).